A 465-amino-acid polypeptide reads, in one-letter code: RuvB-like helicase 2 (465 aa).

Position 73–80 (73–80) interacts with ATP; the sequence is GEPSTGKT.

Belongs to the RuvB family. As to quaternary structure, forms homohexameric rings. May form a dodecamer with pont made of two stacked hexameric rings. Component of the chromatin remodeling Ino80 complex.

The protein localises to the nucleus. It carries out the reaction ATP + H2O = ADP + phosphate + H(+). Acts as a transcriptional coactivator in Wg signaling. Functionally, proposed core component of the chromatin remodeling Ino80 complex which is involved in transcriptional regulation, DNA replication and probably DNA repair. In Aedes aegypti (Yellowfever mosquito), this protein is RuvB-like helicase 2.